Consider the following 922-residue polypeptide: Coronin-7 (922 aa).

4 WD repeats span residues 75–115 (CHSD…EALP), 124–163 (PEELPVDVLQFHPTADGVLVSTAGRTVKVWDVAKQQHLTE), 166–205 (AHKDLVQSAVWSRDGATVGTACKDKQLRIFDPRARAQASQ), and 209–253 (AHEN…SALA). Positions 386-462 (NPAHRPHPRF…TSPSQRSLQS (77 aa)) are disordered. The span at 423–456 (SEGFSSPSSLVSPSTPSSLGLSLSSTSGIGTSPS) shows a compositional bias: low complexity. A phosphoserine mark is found at Ser-459 and Ser-462. Lys-469 participates in a covalent cross-link: Glycyl lysine isopeptide (Lys-Gly) (interchain with G-Cter in ubiquitin). WD repeat units follow at residues 539–579 (QNGA…LKNV), 589–629 (GHTE…EQLR), 632–671 (GHQDQIFSLAWSPDGKQLATVCKDGRVRVYDPRSSPLPLQ), and 725–765 (DVAP…PFFL). Residues 854-922 (LQPPGMTPVS…FEGVDEDEWD (69 aa)) are disordered. Residue Thr-874 is modified to Phosphothreonine. A compositionally biased stretch (basic and acidic residues) spans 881-893 (LEEKSDQQKKEEL). Ser-912 carries the post-translational modification Phosphoserine.

Belongs to the WD repeat coronin family. Interacts with clathrin adapter AP1 complex. This interaction takes place at Golgi membranes and not AP1-positive endosomal membranes. Interacts (when ubiquitinated at Lys-469) with EPS15. Post-translationally, the membrane-associated form is phosphorylated on tyrosine residues. In terms of processing, ubiquitinated via 'Lys-33'-linked ubiquitin chains by the BCR(KLHL20) E3 ubiquitin ligase complex: 'Lys-33'-linked ubiquitination promotes interaction with EPS15 and facilitates actin polymerization at the trans-Golgi network, thereby facilitating post-Golgi trafficking. Deubiquitinated by ZRANB1/TRABID.

The protein resides in the golgi apparatus membrane. It is found in the golgi apparatus. It localises to the trans-Golgi network. Its subcellular location is the cytoplasmic vesicle. The protein localises to the cytoplasm. The protein resides in the cytosol. Functionally, F-actin regulator involved in anterograde Golgi to endosome transport: upon ubiquitination via 'Lys-33'-linked ubiquitin chains by the BCR(KLHL20) E3 ubiquitin ligase complex, interacts with EPS15 and localizes to the trans-Golgi network, where it promotes actin polymerization, thereby facilitating post-Golgi trafficking. May play a role in the maintenance of the Golgi apparatus morphology. The chain is Coronin-7 (Coro7) from Rattus norvegicus (Rat).